The primary structure comprises 1402 residues: Roundabout homolog 3 (1402 aa).

The signal sequence occupies residues 1 to 20 (MLRYLLKTLLQMNLFADSLA). At 21–891 (RDISNSSELL…ERLAKVLRKP (871 aa)) the chain is on the extracellular side. 3 N-linked (GlcNAc...) asparagine glycosylation sites follow: Asn25, Asn34, and Asn53. Ig-like C2-type domains follow at residues 64 to 160 (PRIV…ASLE), 166 to 253 (DDFR…AELV), 258 to 342 (PSFL…GSLS), 347 to 440 (PQFV…ALLE), and 450 to 531 (PPII…GEAT). A disulfide bridge connects residues Cys85 and Cys143. The N-linked (GlcNAc...) asparagine glycan is linked to Asn156. Disulfide bonds link Cys187-Cys236 and Cys279-Cys326. Asn355, Asn363, Asn410, Asn459, and Asn503 each carry an N-linked (GlcNAc...) asparagine glycan. Cys368 and Cys424 form a disulfide bridge. Cysteines 472 and 521 form a disulfide. Disordered stretches follow at residues 540-561 (EDWG…PPSQ) and 639-662 (EPSP…EDPW). The segment covering 543-552 (GASPGPATGP) has biased composition (low complexity). 3 Fibronectin type-III domains span residues 558-652 (PPSQ…TQDS), 672-766 (AVRM…IPEE), and 771-869 (PPQG…FPPA). A compositionally biased stretch (polar residues) spans 646–655 (PVQTQDSSLS). N-linked (GlcNAc...) asparagine glycosylation is found at Asn784, Asn813, and Asn820. Residues 892-912 (AFLAGSSAACGALLLGFCAAL) form a helical membrane-spanning segment. The Cytoplasmic segment spans residues 913–1402 (YRRQKQRKEL…PGRNRREEPR (490 aa)). Disordered stretches follow at residues 965–989 (SWPH…NPDP), 1032–1307 (FHGG…VVQA), and 1340–1402 (GRPS…EEPR). 2 stretches are compositionally biased toward polar residues: residues 1038–1049 (QHSSGDPSTWSQ) and 1142–1152 (PSPTSSYGQQS). Positions 1158-1169 (PSPPDPPQPPTD) are enriched in pro residues. Composition is skewed to low complexity over residues 1178 to 1191 (RRVP…LSVS) and 1215 to 1228 (ASPS…SSAP). Over residues 1243-1254 (HGHRARIRKKPK) the composition is skewed to basic residues. Phosphoserine is present on Ser1263. The span at 1294 to 1304 (LERERSGERRV) shows a compositional bias: basic and acidic residues. The segment covering 1346 to 1357 (SHGQGTSTCSTA) has biased composition (polar residues). The span at 1358 to 1371 (GSNSSRGSNSSRGS) shows a compositional bias: low complexity.

This sequence belongs to the immunoglobulin superfamily. ROBO family. As to quaternary structure, interacts (via Fibronectin type-III 1 domain) with NELL2 (via the EGF domains) with a 3:3 stoichiometry; this interaction promotes oligomerization of ROBO3 resulting in the repulsion of commissural axons in the midline. As to expression, detected in embryonal spinal cord and hindbrain.

It localises to the membrane. Functionally, receptor involved in axon guidance during development. Acts as a multifunctional regulator of pathfinding that simultaneously mediates NELL2 repulsion, inhibits SLIT repulsion, and facilitates Netrin-1/NTN1 attraction. In spinal cord development plays a role in guiding commissural axons probably by preventing premature sensitivity to Slit proteins thus inhibiting Slit signaling through ROBO1/ROBO2. Binding OF NELL2 to the receptor ROBO3 promotes oligomerization of ROBO3, resulting in the repulsion of commissural axons in the midline. ROBO3 also indirectly boosts axon attraction to NTN1 without interacting with NTN1 itself. Its function is as follows. Mediates NELL2 premature repulsion of commissural axons during midline crossing. After midline crossing by the commissural axons, may, in concert with ROBO1 and ROBO2, prevent midline recrossing. Does not mediate NELL2 signaling. The chain is Roundabout homolog 3 from Mus musculus (Mouse).